The primary structure comprises 345 residues: Phosphate acyltransferase (345 aa).

It belongs to the PlsX family. As to quaternary structure, homodimer. Probably interacts with PlsY.

The protein localises to the cytoplasm. The catalysed reaction is a fatty acyl-[ACP] + phosphate = an acyl phosphate + holo-[ACP]. Its pathway is lipid metabolism; phospholipid metabolism. Functionally, catalyzes the reversible formation of acyl-phosphate (acyl-PO(4)) from acyl-[acyl-carrier-protein] (acyl-ACP). This enzyme utilizes acyl-ACP as fatty acyl donor, but not acyl-CoA. The protein is Phosphate acyltransferase of Photorhabdus laumondii subsp. laumondii (strain DSM 15139 / CIP 105565 / TT01) (Photorhabdus luminescens subsp. laumondii).